A 137-amino-acid polypeptide reads, in one-letter code: Acidic phospholipase A2 1 (137 aa).

The first 11 residues, 1 to 11 (LVAVCVSLLGA), serve as a signal peptide directing secretion. A propeptide spanning residues 12 to 19 (ANIPPQPL) is cleaved from the precursor. Disulfide bonds link Cys-30–Cys-89, Cys-44–Cys-136, Cys-46–Cys-62, Cys-61–Cys-117, Cys-68–Cys-110, Cys-78–Cys-103, and Cys-96–Cys-108. Tyr-45, Gly-47, and Gly-49 together coordinate Ca(2+). Residues Gly-49 and His-65 each contribute to the tridecanoate site. The active site involves His-65. A Ca(2+)-binding site is contributed by Asp-66. Asp-111 is an active-site residue.

Monomer. It depends on Ca(2+) as a cofactor. In terms of tissue distribution, expressed by the venom gland.

The protein localises to the secreted. It catalyses the reaction a 1,2-diacyl-sn-glycero-3-phosphocholine + H2O = a 1-acyl-sn-glycero-3-phosphocholine + a fatty acid + H(+). Its function is as follows. Snake venom phospholipase A2 (PLA2) that shows anticoagulant and neurotoxic activities. PLA2 catalyzes the calcium-dependent hydrolysis of the 2-acyl groups in 3-sn-phosphoglycerides. The polypeptide is Acidic phospholipase A2 1 (Bungarus caeruleus (Indian krait)).